The sequence spans 131 residues: Small ribosomal subunit protein uS8 (131 aa).

The protein belongs to the universal ribosomal protein uS8 family. As to quaternary structure, part of the 30S ribosomal subunit. Contacts proteins S5 and S12.

One of the primary rRNA binding proteins, it binds directly to 16S rRNA central domain where it helps coordinate assembly of the platform of the 30S subunit. This Acinetobacter baylyi (strain ATCC 33305 / BD413 / ADP1) protein is Small ribosomal subunit protein uS8.